A 224-amino-acid chain; its full sequence is V-type proton ATPase subunit S1-like protein (224 aa).

Residues 147–167 form a helical membrane-spanning segment; it reads PAFLIGLAMSLILLLVLAYAL.

Belongs to the vacuolar ATPase subunit S1 family.

Its subcellular location is the membrane. The protein is V-type proton ATPase subunit S1-like protein (ATP6AP1L) of Homo sapiens (Human).